Here is a 345-residue protein sequence, read N- to C-terminus: N-acetyl-gamma-glutamyl-phosphate reductase (345 aa).

The active site involves cysteine 149.

Belongs to the NAGSA dehydrogenase family. Type 1 subfamily.

It is found in the cytoplasm. The catalysed reaction is N-acetyl-L-glutamate 5-semialdehyde + phosphate + NADP(+) = N-acetyl-L-glutamyl 5-phosphate + NADPH + H(+). The protein operates within amino-acid biosynthesis; L-arginine biosynthesis; N(2)-acetyl-L-ornithine from L-glutamate: step 3/4. Functionally, catalyzes the NADPH-dependent reduction of N-acetyl-5-glutamyl phosphate to yield N-acetyl-L-glutamate 5-semialdehyde. The polypeptide is N-acetyl-gamma-glutamyl-phosphate reductase (Bacillus anthracis).